We begin with the raw amino-acid sequence, 141 residues long: Ribonuclease P protein component (141 aa).

Disordered regions lie at residues 37 to 56 and 114 to 141; these read RTEE…VGFT and RRIT…VNGK. Basic and acidic residues predominate over residues 114–124; it reads RRITAKGERRS.

Belongs to the RnpA family. Consists of a catalytic RNA component (M1 or rnpB) and a protein subunit.

It carries out the reaction Endonucleolytic cleavage of RNA, removing 5'-extranucleotides from tRNA precursor.. In terms of biological role, RNaseP catalyzes the removal of the 5'-leader sequence from pre-tRNA to produce the mature 5'-terminus. It can also cleave other RNA substrates such as 4.5S RNA. The protein component plays an auxiliary but essential role in vivo by binding to the 5'-leader sequence and broadening the substrate specificity of the ribozyme. This Brucella melitensis biotype 2 (strain ATCC 23457) protein is Ribonuclease P protein component.